We begin with the raw amino-acid sequence, 382 residues long: Cytochrome b (382 aa).

4 helical membrane-spanning segments follow: residues 33-53, 77-98, 113-133, and 178-198; these read FGSL…FLAM, WLVR…YTHI, WTVG…GYVL, and FFAF…IHLL. Heme b-binding residues include histidine 83 and histidine 97. The heme b site is built by histidine 182 and histidine 196. Histidine 201 contributes to the a ubiquinone binding site. The next 4 helical transmembrane spans lie at 226 to 246, 288 to 308, 320 to 340, and 347 to 367; these read LKDL…ALLT, LGGV…PFLQ, LTQL…WIGG, and FVSI…IIIP.

This sequence belongs to the cytochrome b family. In terms of assembly, the cytochrome bc1 complex contains 3 respiratory subunits (MT-CYB, CYC1 and UQCRFS1), 2 core proteins (UQCRC1 and UQCRC2) and probably 6 low-molecular weight proteins. Heme b is required as a cofactor.

It is found in the mitochondrion inner membrane. Functionally, component of the ubiquinol-cytochrome c reductase complex (complex III or cytochrome b-c1 complex) that is part of the mitochondrial respiratory chain. The b-c1 complex mediates electron transfer from ubiquinol to cytochrome c. Contributes to the generation of a proton gradient across the mitochondrial membrane that is then used for ATP synthesis. The chain is Cytochrome b (mt-cyb) from Sigmops gracilis (Slender fangjaw).